A 178-amino-acid polypeptide reads, in one-letter code: Large ribosomal subunit protein uL6 (178 aa).

The protein belongs to the universal ribosomal protein uL6 family. In terms of assembly, part of the 50S ribosomal subunit.

Its function is as follows. This protein binds to the 23S rRNA, and is important in its secondary structure. It is located near the subunit interface in the base of the L7/L12 stalk, and near the tRNA binding site of the peptidyltransferase center. This chain is Large ribosomal subunit protein uL6, found in Frankia alni (strain DSM 45986 / CECT 9034 / ACN14a).